A 215-amino-acid polypeptide reads, in one-letter code: Probable transaldolase (215 aa).

The active-site Schiff-base intermediate with substrate is lysine 83.

The protein belongs to the transaldolase family. Type 3B subfamily.

The protein localises to the cytoplasm. It carries out the reaction D-sedoheptulose 7-phosphate + D-glyceraldehyde 3-phosphate = D-erythrose 4-phosphate + beta-D-fructose 6-phosphate. It functions in the pathway carbohydrate degradation; pentose phosphate pathway; D-glyceraldehyde 3-phosphate and beta-D-fructose 6-phosphate from D-ribose 5-phosphate and D-xylulose 5-phosphate (non-oxidative stage): step 2/3. Its function is as follows. Transaldolase is important for the balance of metabolites in the pentose-phosphate pathway. In Desulforapulum autotrophicum (strain ATCC 43914 / DSM 3382 / VKM B-1955 / HRM2) (Desulfobacterium autotrophicum), this protein is Probable transaldolase.